The following is a 156-amino-acid chain: Nucleoredoxin-like protein 2 (156 aa).

The Thioredoxin domain maps to 9–147 (HLVTCKGATV…LACFQDWVEA (139 aa)).

It belongs to the nucleoredoxin family.

May be involved in the maintenance of both the function and the viability of sensory neurons, including photoreceptors and olfactory neurons. This Homo sapiens (Human) protein is Nucleoredoxin-like protein 2 (NXNL2).